Reading from the N-terminus, the 692-residue chain is MEKYERIRVVGRGAFGIVHLCLRKADQKLVIIKQIPVEQMTKEERQAAQNECQVLKLLNHPNVIEYYENFLEDKALMIAMEYAPGGTLAEFIQKRCNSLLEEETILHFFVQILLALHHVHTHLILHRDLKTQNILLDKHRMVVKIGDFGISKILSSKSKAYTVVGTPCYISPELCEGKPYNQKSDIWALGCVLYELASLKRAFEAANLPALVLKIMSGTFAPISDRYSPELRQLVLSLLSLEPAQRPPLSHIMAQPLCIRALLNLHTDVGSVRMRRAEKSVAPSNTGSRTTSVRCRGIPRGPVRPAIPPPLSSVYAWGGGLGTPLRLPMLNTEVVQVAAGRTQKAGVTRSGRLILWEAPPLGAGGGSLLPGAVEQPQPQFISRFLEGQSGVTIKHVACGDFFTACLTDRGIIMTFGSGSNGCLGHGSLTDISQPTIVEALLGYEMVQVACGASHVLALSTERELFAWGRGDSGRLGLGTRESHSCPQQVPMPPGQEAQRVVCGIDSSMILTVPGQALACGSNRFNKLGLDHLSLGEEPVPHQQVEEALSFTLLGSAPLDQEPLLSIDLGTAHSAAVTASGDCYTFGSNQHGQLGTNTRRGSRAPCKVQGLEGIKMAMVACGDAFTVAIGAESEVYSWGKGARGRLGRRDEDAGLPRPVQLDETHPYTVTSVSCCHGNTLLAVRSVTDEPVPP.

The Protein kinase domain occupies 4–258 (YERIRVVGRG…LSHIMAQPLC (255 aa)). ATP is bound by residues 10–18 (VGRGAFGIV) and Lys-33. Asp-128 serves as the catalytic Proton acceptor. Thr-162 carries the post-translational modification Phosphothreonine; by autocatalysis. The segment at 277-301 (AEKSVAPSNTGSRTTSVRCRGIPRG) is disordered. The segment covering 282–293 (APSNTGSRTTSV) has biased composition (polar residues). RCC1 repeat units lie at residues 312–350 (SSVYAWGGGLGTPLRLPMLNTEVVQVAAGRTQKAGVTRS), 410–461 (GIIM…LSTE), 462–513 (RELF…LTVP), 580–631 (GDCY…IGAE), and 632–684 (SEVY…AVRS).

Belongs to the protein kinase superfamily. NEK Ser/Thr protein kinase family. NIMA subfamily. In terms of assembly, interacts with PKD2; may regulate PKD2 targeting to the cilium. Interacts with ANKS6. Component of a complex containing at least ANKS6, INVS, NEK8 and NPHP3. ANKS6 may organize complex assembly by linking INVS and NPHP3 to NEK8 and INVS may target the complex to the proximal ciliary axoneme. Interacts with ANKS3. Requires Mg(2+) as cofactor. As to expression, highest expression in thyroid, adrenal gland and skin. Low levels in spleen, colon and uterus. Overexpressed in breast tumors, with highest expression in infiltrating ductal carcinomas and moderate levels in mucinous adenocarcinoma.

The protein localises to the cytoplasm. It localises to the cytoskeleton. It is found in the cell projection. Its subcellular location is the cilium. The protein resides in the microtubule organizing center. The protein localises to the centrosome. It localises to the cilium axoneme. It carries out the reaction L-seryl-[protein] + ATP = O-phospho-L-seryl-[protein] + ADP + H(+). The catalysed reaction is L-threonyl-[protein] + ATP = O-phospho-L-threonyl-[protein] + ADP + H(+). Its function is as follows. Required for renal tubular integrity. May regulate local cytoskeletal structure in kidney tubule epithelial cells. May regulate ciliary biogenesis through targeting of proteins to the cilia. Plays a role in organogenesis, and is involved in the regulation of the Hippo signaling pathway. The chain is Serine/threonine-protein kinase Nek8 (NEK8) from Homo sapiens (Human).